Here is a 162-residue protein sequence, read N- to C-terminus: UPF0262 protein Acry_0160 (162 aa).

This sequence belongs to the UPF0262 family.

This chain is UPF0262 protein Acry_0160, found in Acidiphilium cryptum (strain JF-5).